Consider the following 151-residue polypeptide: Phosphoribosyl-AMP cyclohydrolase (151 aa).

The span at 1–13 shows a compositional bias: polar residues; that stretch reads MMTLTFASPPQNK. The tract at residues 1–20 is disordered; it reads MMTLTFASPPQNKSDLETGP. Asp93 is a Mg(2+) binding site. Zn(2+) is bound at residue Cys94. Residues Asp95 and Asp97 each coordinate Mg(2+). Residues Cys112 and Cys119 each contribute to the Zn(2+) site.

This sequence belongs to the PRA-CH family. In terms of assembly, homodimer. Mg(2+) is required as a cofactor. Requires Zn(2+) as cofactor.

The protein localises to the cytoplasm. It carries out the reaction 1-(5-phospho-beta-D-ribosyl)-5'-AMP + H2O = 1-(5-phospho-beta-D-ribosyl)-5-[(5-phospho-beta-D-ribosylamino)methylideneamino]imidazole-4-carboxamide. Its pathway is amino-acid biosynthesis; L-histidine biosynthesis; L-histidine from 5-phospho-alpha-D-ribose 1-diphosphate: step 3/9. Functionally, catalyzes the hydrolysis of the adenine ring of phosphoribosyl-AMP. The polypeptide is Phosphoribosyl-AMP cyclohydrolase (Sinorhizobium medicae (strain WSM419) (Ensifer medicae)).